A 340-amino-acid chain; its full sequence is Methionine import ATP-binding protein MetN (340 aa).

An ABC transporter domain is found at 5–243 (IEFRGVTKSF…PQTTTARRFV (239 aa)). 40–47 (GYSGAGKS) contacts ATP.

The protein belongs to the ABC transporter superfamily. Methionine importer (TC 3.A.1.24) family. The complex is composed of two ATP-binding proteins (MetN), two transmembrane proteins (MetI) and a solute-binding protein (MetQ).

The protein resides in the cell membrane. It catalyses the reaction L-methionine(out) + ATP + H2O = L-methionine(in) + ADP + phosphate + H(+). The catalysed reaction is D-methionine(out) + ATP + H2O = D-methionine(in) + ADP + phosphate + H(+). In terms of biological role, part of the ABC transporter complex MetNIQ involved in methionine import. Responsible for energy coupling to the transport system. This Leifsonia xyli subsp. xyli (strain CTCB07) protein is Methionine import ATP-binding protein MetN.